A 2460-amino-acid chain; its full sequence is Reducing polyketide synthase BOA6 (2460 aa).

A Ketosynthase family 3 (KS3) domain is found at 5–438; it reads NEPIAVIGTG…GTNAHAILES (434 aa). Residues C178, H317, and H360 each act as for beta-ketoacyl synthase activity in the active site. Residues 549 to 864 are malonyl-CoA:ACP transacylase (MAT) domain; the sequence is VFTGQGAQWP…PYTGVLSRGD (316 aa). An N-terminal hotdog fold region spans residues 938–1073; it reads HELLGVRCAD…GRIKMTLGTP (136 aa). Residues 938 to 1244 are dehydratase (DH) domain; that stretch reads HELLGVRCAD…QMQSFTAARP (307 aa). Positions 938–1245 constitute a PKS/mFAS DH domain; sequence HELLGVRCAD…MQSFTAARPS (308 aa). H970 acts as the Proton acceptor; for dehydratase activity in catalysis. Residues 1088–1245 are C-terminal hotdog fold; the sequence is LGPLNVDRFY…MQSFTAARPS (158 aa). The active-site Proton donor; for dehydratase activity is the D1145. The methyltransferase (MT) domain stretch occupies residues 1399-1586; that stretch reads NKFVTAAMKK…VNDFKDKSRY (188 aa). Residues 2098 to 2266 are ketoreductase (KR) domain; that stretch reads SYLLAGLTGD…KRGGVASVIH (169 aa). Residues 2378 to 2456 form the Carrier domain; sequence DEVLGVMQKC…DLCELACEEY (79 aa). S2416 is modified (O-(pantetheine 4'-phosphoryl)serine).

It participates in polyketide biosynthesis. Reducing polyketide synthase; part of the gene cluster A that mediates the biosynthesis of botcinic acid and its botcinin derivatives, acetate-derived polyketides that contribute to virulence when combined with the sesquiterpene botrydial. Botcinic acid and its derivatives have been shown to induce chlorosis and necrosis during host plant infection, but also have antifungal activities. Two polyketide synthases, BOA6 and BOA9, are involved in the biosynthesis of botcinins. BOA6 mediates the formation of the per-methylated tetraketide core by condensation of four units of malonyl-CoA with one unit of acetyl-CoA, which would be methylated in activated methylene groups to yield a bicyclic acid intermediate that could then either be converted to botrylactone derivatives or lose the starter acetate unit through a retro-Claisen type C-C bond cleavage to yield botcinin derivatives. The second polyketide synthase, BOA9, is probably required for the biosynthesis of the tetraketide side chain of botcinins. The methyltransferase (MT) domain within BOA6 is probably responsible for the incorporation of four methyl groups. The trans-enoyl reductase BOA5 might take over the enoyl reductase function of BOA6 that misses an ER domain. The monooxygenases BOA2, BOA3 and BOA4 might be involved in further hydroxylations at C4, C5 and C8, whereas BOA7, close to BOA9, could potentially be involved in the hydroxylation at C4 in the side chain of botcinins. This Botryotinia fuckeliana (strain B05.10) (Noble rot fungus) protein is Reducing polyketide synthase BOA6.